Consider the following 170-residue polypeptide: Lipoprotein signal peptidase (170 aa).

3 helical membrane passes run 12–32 (WYWI…WVLS), 67–87 (WQRW…SVWL), and 94–113 (MWRL…GNLI). Active-site residues include Asp-123 and Asp-141. Residues 133 to 153 (HFPAFNIADSAICIGAGLIIL) traverse the membrane as a helical segment.

It belongs to the peptidase A8 family.

It localises to the cell inner membrane. The enzyme catalyses Release of signal peptides from bacterial membrane prolipoproteins. Hydrolyzes -Xaa-Yaa-Zaa-|-(S,diacylglyceryl)Cys-, in which Xaa is hydrophobic (preferably Leu), and Yaa (Ala or Ser) and Zaa (Gly or Ala) have small, neutral side chains.. The protein operates within protein modification; lipoprotein biosynthesis (signal peptide cleavage). In terms of biological role, this protein specifically catalyzes the removal of signal peptides from prolipoproteins. This is Lipoprotein signal peptidase from Shewanella piezotolerans (strain WP3 / JCM 13877).